The sequence spans 1355 residues: DNA-directed RNA polymerase subunit beta' (1355 aa).

Residues C219, C293, C300, and C303 each contribute to the Zn(2+) site. A disordered region spans residues 1331 to 1355 (AEVEVDDEVDDDYEDDDEDDDDYED).

Belongs to the RNA polymerase beta' chain family. RpoC2 subfamily. In terms of assembly, in cyanobacteria the RNAP catalytic core is composed of 2 alpha, 1 beta, 1 beta', 1 gamma and 1 omega subunit. When a sigma factor is associated with the core the holoenzyme is formed, which can initiate transcription. Zn(2+) serves as cofactor.

It carries out the reaction RNA(n) + a ribonucleoside 5'-triphosphate = RNA(n+1) + diphosphate. In terms of biological role, DNA-dependent RNA polymerase catalyzes the transcription of DNA into RNA using the four ribonucleoside triphosphates as substrates. The protein is DNA-directed RNA polymerase subunit beta' of Nostoc sp. (strain PCC 7120 / SAG 25.82 / UTEX 2576).